We begin with the raw amino-acid sequence, 365 residues long: Palmitoyltransferase ZDHHC20 (365 aa).

Residues Met1–Val14 are Cytoplasmic-facing. Residues Gly15–Val35 traverse the membrane as a helical segment. The Lumenal segment spans residues Glu36–Val53. A helical membrane pass occupies residues Tyr54–Phe74. The Cytoplasmic segment spans residues Thr75–Lys169. Positions Arg126 to Phe176 constitute a DHHC domain. Zn(2+)-binding residues include Cys128 and Cys131. Substrate is bound by residues Lys135 and His140–Ser143. Zn(2+)-binding residues include His141, Cys142, Cys145, Cys148, and His155. Residue Cys156 is the S-palmitoyl cysteine intermediate of the active site. Cys162 is a binding site for Zn(2+). A helical membrane pass occupies residues Phe170–Leu190. Over Gln191–Lys207 the chain is Lumenal. Residues Phe208–His231 form a helical membrane-spanning segment. Topologically, residues Cys232–Asn365 are cytoplasmic. Residues Pro301 to Asn365 form a disordered region. A compositionally biased stretch (polar residues) spans Glu302 to Pro321. Phosphoserine occurs at positions 305 and 330.

Belongs to the DHHC palmitoyltransferase family. Autopalmitoylated (in vitro).

The protein localises to the golgi apparatus membrane. It is found in the cell membrane. Its subcellular location is the cytoplasm. The protein resides in the perinuclear region. It localises to the endoplasmic reticulum membrane. The protein localises to the endoplasmic reticulum-Golgi intermediate compartment membrane. The catalysed reaction is L-cysteinyl-[protein] + hexadecanoyl-CoA = S-hexadecanoyl-L-cysteinyl-[protein] + CoA. It carries out the reaction L-cysteinyl-[protein] + tetradecanoyl-CoA = S-tetradecanoyl-L-cysteinyl-[protein] + CoA. It catalyses the reaction L-cysteinyl-[protein] + octadecanoyl-CoA = S-octadecanoyl-L-cysteinyl-[protein] + CoA. In terms of biological role, palmitoyltransferase that could catalyze the addition of palmitate onto various protein substrates. Catalyzes palmitoylation of Cys residues in the cytoplasmic C-terminus of EGFR, and modulates the duration of EGFR signaling by modulating palmitoylation-dependent EGFR internalization and degradation. Has a preference for acyl-CoA with C16 fatty acid chains. Can also utilize acyl-CoA with C14 and C18 fatty acid chains. May palmitoylate CALHM1 subunit of gustatory voltage-gated ion channels and modulate channel gating and kinetics. The chain is Palmitoyltransferase ZDHHC20 from Bos taurus (Bovine).